Consider the following 795-residue polypeptide: Putative replication origin-binding protein (795 aa).

Residues 121–289 (WLSNDKIKTL…DNFGKSIVVN (169 aa)) enclose the Helicase ATP-binding domain. 134 to 141 (SPMGTGKT) is an ATP binding site.

Belongs to the mimivirus R1 family.

Its function is as follows. Probably involved in DNA replication. May bind the genome origin of replication (ori). This chain is Putative replication origin-binding protein, found in Acanthamoeba polyphaga (Amoeba).